Here is a 274-residue protein sequence, read N- to C-terminus: Large ribosomal subunit protein uL2 (274 aa).

The tract at residues Arg-221–Lys-256 is disordered.

It belongs to the universal ribosomal protein uL2 family. As to quaternary structure, part of the 50S ribosomal subunit. Forms a bridge to the 30S subunit in the 70S ribosome.

Its function is as follows. One of the primary rRNA binding proteins. Required for association of the 30S and 50S subunits to form the 70S ribosome, for tRNA binding and peptide bond formation. It has been suggested to have peptidyltransferase activity; this is somewhat controversial. Makes several contacts with the 16S rRNA in the 70S ribosome. In Hahella chejuensis (strain KCTC 2396), this protein is Large ribosomal subunit protein uL2.